The following is a 257-amino-acid chain: Gamma-secretase subunit APH-1B (257 aa).

7 helical membrane-spanning segments follow: residues 5 to 25, 32 to 52, 66 to 86, 115 to 135, 160 to 180, 186 to 206, and 213 to 233; these read VFFGCAFIAFGPALALYVFTI, VIFLIAGAFFWLVSLLLSSVF, PVQNYLLIFGVLLSVCIQELF, LLAYVSGLGFGIMSGVFSFVN, AFMTLVVIMLHVFWGVVFFDG, WYTLLTVLLTHLVVSTQTFLS, and LVTAYIIMVLMGIWAFYVAGG.

Belongs to the APH-1 family. As to quaternary structure, probable component of the gamma-secretase complex, a complex composed of a presenilin homodimer (PSEN1 or PSEN2), nicastrin (NCSTN), APH1 (APH1A or APH1B) and PEN2. Such minimal complex is sufficient for secretase activity, although other components may exist. Interacts with PSEN1 and PSEN2.

The protein resides in the membrane. Probable subunit of the gamma-secretase complex, an endoprotease complex that catalyzes the intramembrane cleavage of integral proteins such as Notch receptors and APP (amyloid-beta precursor protein). It probably represents a stabilizing cofactor for the presenilin homodimer that promotes the formation of a stable complex. Probably present in a minority of gamma-secretase complexes compared to APH1A. This is Gamma-secretase subunit APH-1B (Aph1b) from Mus musculus (Mouse).